A 304-amino-acid chain; its full sequence is uncharacterized protein (304 aa).

Helical transmembrane passes span 9 to 29 (VFYV…SIHF), 67 to 87 (IILY…GNMF), 100 to 120 (AGSI…GIFF), 131 to 151 (EFYI…INSS), 159 to 179 (FFLG…QNLI), 189 to 209 (AVVI…CLAF), 222 to 242 (IGML…GMLM), 252 to 272 (ITVF…IGYL), and 278 to 298 (INIY…LALK). EamA domains follow at residues 13–148 (LLMG…IFVI) and 171–298 (FIQS…LALK).

This sequence belongs to the EamA transporter family.

It localises to the cell membrane. This is an uncharacterized protein from Haemophilus influenzae (strain ATCC 51907 / DSM 11121 / KW20 / Rd).